The chain runs to 141 residues: Transcription antitermination protein NusB (141 aa).

This sequence belongs to the NusB family.

In terms of biological role, involved in transcription antitermination. Required for transcription of ribosomal RNA (rRNA) genes. Binds specifically to the boxA antiterminator sequence of the ribosomal RNA (rrn) operons. The polypeptide is Transcription antitermination protein NusB (Fervidobacterium nodosum (strain ATCC 35602 / DSM 5306 / Rt17-B1)).